The following is a 79-amino-acid chain: uncharacterized protein (79 aa).

An N-terminal signal peptide occupies residues 1–33 (MRLSIRAIVLFALVWIGLLMSGYGVLVGSKVNA).

This is an uncharacterized protein from Salmonella paratyphi A (strain ATCC 9150 / SARB42).